Here is a 456-residue protein sequence, read N- to C-terminus: Dual-specificity RNA methyltransferase RlmN (456 aa).

The disordered stretch occupies residues 1–21; it reads MIQRHLGQPRLIQNGGDAGGV. Glutamate 175 acts as the Proton acceptor in catalysis. The region spanning 183–416 is the Radical SAM core domain; it reads DEERGAVCIS…QDAGYSAPIR (234 aa). Cysteine 190 and cysteine 427 are joined by a disulfide. 3 residues coordinate [4Fe-4S] cluster: cysteine 197, cysteine 201, and cysteine 204. S-adenosyl-L-methionine contacts are provided by residues 253-254, serine 285, 307-309, and asparagine 384; these read GE and SLH. Cysteine 427 functions as the S-methylcysteine intermediate in the catalytic mechanism.

The protein belongs to the radical SAM superfamily. RlmN family. It depends on [4Fe-4S] cluster as a cofactor.

The protein resides in the cytoplasm. The enzyme catalyses adenosine(2503) in 23S rRNA + 2 reduced [2Fe-2S]-[ferredoxin] + 2 S-adenosyl-L-methionine = 2-methyladenosine(2503) in 23S rRNA + 5'-deoxyadenosine + L-methionine + 2 oxidized [2Fe-2S]-[ferredoxin] + S-adenosyl-L-homocysteine. It carries out the reaction adenosine(37) in tRNA + 2 reduced [2Fe-2S]-[ferredoxin] + 2 S-adenosyl-L-methionine = 2-methyladenosine(37) in tRNA + 5'-deoxyadenosine + L-methionine + 2 oxidized [2Fe-2S]-[ferredoxin] + S-adenosyl-L-homocysteine. Specifically methylates position 2 of adenine 2503 in 23S rRNA and position 2 of adenine 37 in tRNAs. m2A2503 modification seems to play a crucial role in the proofreading step occurring at the peptidyl transferase center and thus would serve to optimize ribosomal fidelity. The sequence is that of Dual-specificity RNA methyltransferase RlmN from Paramagnetospirillum magneticum (strain ATCC 700264 / AMB-1) (Magnetospirillum magneticum).